We begin with the raw amino-acid sequence, 446 residues long: Phosphoglucosamine mutase (446 aa).

The active-site Phosphoserine intermediate is S103. Positions 103, 242, 244, and 246 each coordinate Mg(2+). S103 carries the post-translational modification Phosphoserine.

Belongs to the phosphohexose mutase family. The cofactor is Mg(2+). Activated by phosphorylation.

The enzyme catalyses alpha-D-glucosamine 1-phosphate = D-glucosamine 6-phosphate. In terms of biological role, catalyzes the conversion of glucosamine-6-phosphate to glucosamine-1-phosphate. The protein is Phosphoglucosamine mutase of Vibrio vulnificus (strain CMCP6).